The sequence spans 447 residues: Phosphoglucosamine mutase (447 aa).

Ser-104 (phosphoserine intermediate) is an active-site residue. Mg(2+) is bound by residues Ser-104, Asp-243, Asp-245, and Asp-247. Residue Ser-104 is modified to Phosphoserine.

It belongs to the phosphohexose mutase family. The cofactor is Mg(2+). In terms of processing, activated by phosphorylation.

The catalysed reaction is alpha-D-glucosamine 1-phosphate = D-glucosamine 6-phosphate. In terms of biological role, catalyzes the conversion of glucosamine-6-phosphate to glucosamine-1-phosphate. This is Phosphoglucosamine mutase from Corynebacterium efficiens (strain DSM 44549 / YS-314 / AJ 12310 / JCM 11189 / NBRC 100395).